A 652-amino-acid chain; its full sequence is NADH-ubiquinone oxidoreductase chain 5 (652 aa).

16 helical membrane passes run 1–21 (MYLS…FLGR), 30–50 (LITC…FIEV), 72–92 (IIWG…VLII), 119–139 (LFTF…MFVG), 140–160 (WEGV…RIAA), 177–197 (FLTI…YSTV), 200–220 (LAPY…LIGA), 241–261 (TPVS…YLLM), 274–294 (LLLC…IGLF), 301–319 (VIAY…AIGL), 331–351 (NHAF…HAVA), 365–385 (FLPL…AFPF), 403–423 (FSFS…FTTL), 454–474 (LFLT…GFIT), 505–525 (FAVP…FSII), and 619–639 (LYIL…FNFL).

This sequence belongs to the complex I subunit 5 family.

It localises to the mitochondrion inner membrane. The catalysed reaction is a ubiquinone + NADH + 5 H(+)(in) = a ubiquinol + NAD(+) + 4 H(+)(out). In terms of biological role, core subunit of the mitochondrial membrane respiratory chain NADH dehydrogenase (Complex I) that is believed to belong to the minimal assembly required for catalysis. Complex I functions in the transfer of electrons from NADH to the respiratory chain. The immediate electron acceptor for the enzyme is believed to be ubiquinone. The sequence is that of NADH-ubiquinone oxidoreductase chain 5 (ND5) from Podospora anserina (strain S / ATCC MYA-4624 / DSM 980 / FGSC 10383) (Pleurage anserina).